The following is a 361-amino-acid chain: Histidinol-phosphate aminotransferase (361 aa).

At Lys-224 the chain carries N6-(pyridoxal phosphate)lysine.

It belongs to the class-II pyridoxal-phosphate-dependent aminotransferase family. Histidinol-phosphate aminotransferase subfamily. In terms of assembly, homodimer. The cofactor is pyridoxal 5'-phosphate.

It carries out the reaction L-histidinol phosphate + 2-oxoglutarate = 3-(imidazol-4-yl)-2-oxopropyl phosphate + L-glutamate. It functions in the pathway amino-acid biosynthesis; L-histidine biosynthesis; L-histidine from 5-phospho-alpha-D-ribose 1-diphosphate: step 7/9. The chain is Histidinol-phosphate aminotransferase from Limosilactobacillus fermentum (strain NBRC 3956 / LMG 18251) (Lactobacillus fermentum).